The chain runs to 427 residues: Enolase (427 aa).

Q163 lines the (2R)-2-phosphoglycerate pocket. E205 serves as the catalytic Proton donor. Mg(2+)-binding residues include D242, E287, and D314. (2R)-2-phosphoglycerate-binding residues include K339, R368, S369, and K390. Residue K339 is the Proton acceptor of the active site.

Belongs to the enolase family. Mg(2+) is required as a cofactor.

It is found in the cytoplasm. Its subcellular location is the secreted. The protein localises to the cell surface. The enzyme catalyses (2R)-2-phosphoglycerate = phosphoenolpyruvate + H2O. It participates in carbohydrate degradation; glycolysis; pyruvate from D-glyceraldehyde 3-phosphate: step 4/5. Functionally, catalyzes the reversible conversion of 2-phosphoglycerate (2-PG) into phosphoenolpyruvate (PEP). It is essential for the degradation of carbohydrates via glycolysis. This is Enolase from Solibacter usitatus (strain Ellin6076).